Reading from the N-terminus, the 453-residue chain is MREIVSIQCGQAGMNQVSTAFWSTITDEHGLDADGHLRPDASSLESDRLDVFFNEASNKKYVPRAVAVDLEPATLDAIRSGPLGHIYRPDNLISGESGAGNNWAKGFYTEGAELMDSVMDIIRREAEQSESLQGFQLAHSLGGGTGSGLGTLLLTKIREEYPDRMLSTYSVLPSPKVSDTVTEPYNAVLSFHQLIDNADATYCLDNEALYDICEKTLKINRPSHQDLNSLIALVMSGVTTGLRYPGQLNGDLRKLAVNLVPFPRLHFFTTGFAPLFAKNSRAFHNLTVPELTQQLFNPANVMAACNPYHGRYLTISTIFRGQVAMKEVEDAIHTARTKYSPYFVEWIPNNVQTSVCNVPPKGLTTSATFIANSTAVQELFERTANQFSVMFKRKGFLHWYTGEGMEPVEFSEAQSDLEDLILEYQQYQNAGVDEDEELMDHEEYADEGVEDFN.

Residues Gln11, Glu71, Ser140, Gly144, Thr145, Gly146, Asn206, and Asn228 each contribute to the GTP site. Glu71 contributes to the Mg(2+) binding site.

This sequence belongs to the tubulin family. In terms of assembly, dimer of alpha and beta chains. A typical microtubule is a hollow water-filled tube with an outer diameter of 25 nm and an inner diameter of 15 nM. Alpha-beta heterodimers associate head-to-tail to form protofilaments running lengthwise along the microtubule wall with the beta-tubulin subunit facing the microtubule plus end conferring a structural polarity. Microtubules usually have 13 protofilaments but different protofilament numbers can be found in some organisms and specialized cells. The cofactor is Mg(2+).

It is found in the cytoplasm. The protein localises to the cytoskeleton. Functionally, tubulin is the major constituent of microtubules, a cylinder consisting of laterally associated linear protofilaments composed of alpha- and beta-tubulin heterodimers. Microtubules grow by the addition of GTP-tubulin dimers to the microtubule end, where a stabilizing cap forms. Below the cap, tubulin dimers are in GDP-bound state, owing to GTPase activity of alpha-tubulin. In Geotrichum candidum (Oospora lactis), this protein is Tubulin beta-2 chain.